Here is a 186-residue protein sequence, read N- to C-terminus: A-type ATP synthase subunit E (186 aa).

It belongs to the V-ATPase E subunit family. In terms of assembly, has multiple subunits with at least A(3), B(3), C, D, E, F, H, I and proteolipid K(x).

The protein localises to the cell membrane. Component of the A-type ATP synthase that produces ATP from ADP in the presence of a proton gradient across the membrane. This Methanocella arvoryzae (strain DSM 22066 / NBRC 105507 / MRE50) protein is A-type ATP synthase subunit E.